Consider the following 142-residue polypeptide: MSWEQYQMYVPQCHPSFMYQGSIQSTMTTPLQSPNFSLDSPNYPDSLSNGGGKDDKKKCRRYKTPSPQLLRMRRSAANERERRRMNTLNVAYDELREVLPEIDSGKKLSKFETLQMAQKYIECLSQILKQDSKNENLKSKSG.

Positions 30-48 (PLQSPNFSLDSPNYPDSLS) are enriched in polar residues. Positions 30–66 (PLQSPNFSLDSPNYPDSLSNGGGKDDKKKCRRYKTPS) are disordered. The bHLH domain occupies 72–124 (MRRSAANERERRRMNTLNVAYDELREVLPEIDSGKKLSKFETLQMAQKYIECL).

In terms of assembly, forms a heterodimer with hlh-2. Expressed in PVD motor neurons.

The protein localises to the nucleus. Its function is as follows. Probable transcription factor which binds the E box motif 5'-CA[TC][AG]TG-3'. Essential for the specification of the neuroblast cell fate in the development of peripheral sense organs. Its role in the generation of sensory neurons may be through positively regulating the expression of the zinc finger protein ztf-11 during postdeirid neurogenesis. Required for specification of cell fate, acting in concert with lin-32, in the development of the male-specific genital sensilla (simple sense organs) known as rays. Involved in regulating glial specification, perhaps by suppressing a glial fate in different lineages during early embryogenesis. The protein is Protein lin-32 of Caenorhabditis elegans.